Here is a 517-residue protein sequence, read N- to C-terminus: Protein disulfide-isomerase EUG1 (517 aa).

The signal sequence occupies residues 1–29 (MQVTTRFISAIVSFCLFASFTLAENSARA). The 112-residue stretch at 30–141 (TPGSDLLVLT…ITQYMIQLYE (112 aa)) folds into the Thioredoxin 1 domain. N-linked (GlcNAc...) asparagine glycans are attached at residues N159, N174, N207, N293, and N462. Residues 355–487 (YREGTAKPIV…VFEFIKESGT (133 aa)) form the Thioredoxin 2 domain. A Prevents secretion from ER motif is present at residues 514 to 517 (HDEL).

The protein belongs to the protein disulfide isomerase family. Interacts with EPS1. May have O-linked mannose residues.

It localises to the endoplasmic reticulum lumen. It carries out the reaction Catalyzes the rearrangement of -S-S- bonds in proteins.. Functionally, probably interacts with nascent polypeptides in the endoplasmic reticulum. It is an essential gene only in the absence of PDI. Its native disulfide isomerase activity is very low. This Saccharomyces cerevisiae (strain ATCC 204508 / S288c) (Baker's yeast) protein is Protein disulfide-isomerase EUG1 (EUG1).